The primary structure comprises 428 residues: Adenylosuccinate synthetase (428 aa).

GTP is bound by residues 12–18 and 40–42; these read GDEGKGK and GHT. Aspartate 13 (proton acceptor) is an active-site residue. The Mg(2+) site is built by aspartate 13 and glycine 40. Residues 13-16, 38-41, threonine 128, arginine 142, glutamine 223, threonine 238, and arginine 302 each bind IMP; these read DEGK and NAGH. The Proton donor role is filled by histidine 41. 298–304 is a binding site for substrate; sequence TTTGRPR. GTP is bound by residues arginine 304, 330–332, and 412–414; these read SID and SVG.

It belongs to the adenylosuccinate synthetase family. In terms of assembly, homodimer. It depends on Mg(2+) as a cofactor.

The protein localises to the cytoplasm. The enzyme catalyses IMP + L-aspartate + GTP = N(6)-(1,2-dicarboxyethyl)-AMP + GDP + phosphate + 2 H(+). Its pathway is purine metabolism; AMP biosynthesis via de novo pathway; AMP from IMP: step 1/2. Plays an important role in the de novo pathway of purine nucleotide biosynthesis. Catalyzes the first committed step in the biosynthesis of AMP from IMP. In Geobacillus kaustophilus (strain HTA426), this protein is Adenylosuccinate synthetase.